The following is a 258-amino-acid chain: Ribosomal RNA large subunit methyltransferase E (258 aa).

The S-adenosyl-L-methionine site is built by Gly58, Trp60, Asp78, Asp96, and Asp120. Catalysis depends on Lys160, which acts as the Proton acceptor.

This sequence belongs to the class I-like SAM-binding methyltransferase superfamily. RNA methyltransferase RlmE family.

It is found in the cytoplasm. The enzyme catalyses uridine(2552) in 23S rRNA + S-adenosyl-L-methionine = 2'-O-methyluridine(2552) in 23S rRNA + S-adenosyl-L-homocysteine + H(+). In terms of biological role, specifically methylates the uridine in position 2552 of 23S rRNA at the 2'-O position of the ribose in the fully assembled 50S ribosomal subunit. This Methanococcus maripaludis (strain C7 / ATCC BAA-1331) protein is Ribosomal RNA large subunit methyltransferase E.